Here is a 550-residue protein sequence, read N- to C-terminus: MRNSASSNKNNNKGQNDFAEMEYMNITVVTSNEPYGLFDSSNPFFYKRRTPKFNLTLGGVHSGHVQRGLRDPICISTSGKGNCRDGYTKETSGPDSVRVLVATRAKPSKNLNSELDREFYDHFLEVLNRPEETGRFHFSTQFLYYREELFIAELNNSRLGGKPVVFDMDMSAGDFLSLFYLLKVPVEIIDLKAVIVSPTGWANTATIDVVYDLLHMMGRDDIPVGLGDMFAINQSEPVFPSAGDCKYAKAVPQGCGGFLDSDTLYGLARDLPRSPRRYENSVAHGAPSDTDRPELRQPLALEVWQNLTKSVDEVSKITVLTNGPLTSLAKIISSDKNSSSIIKEVYIVGGHISRGKSDKGNIFTVPSNSYAEFNMFLDPLAAKTVLESGLNITLIPLATQREFSFQAMLNRLYSSTKTPEARFVKRLLTRLQALHQKQRRYMHMDMFLGEILGAIFLGGDHALLKPKMRTEYIKVIAEGDESKDGHILIDKLRGKQIKILERVDLRGCYESFASRLDDKKQSAVIGSFEEQRMKWNTPPSYKPITARIFH.

The protein belongs to the IUNH family.

The protein resides in the cytoplasm. May be involved in the degradation of nucleosides. The sequence is that of Nucleoside hydrolase 4 from Arabidopsis thaliana (Mouse-ear cress).